A 953-amino-acid polypeptide reads, in one-letter code: Nonsense-mediated mRNA decay factor SMG8 (953 aa).

2 disordered regions span residues 571-604 and 629-653; these read AEDAELDPDEEDEELPTGEREEQHITQSNGCSQP and PCFDQSSSSEAESTCSGTSSEESNT. Over residues 573-586 the composition is skewed to acidic residues; it reads DAELDPDEEDEELP. Positions 595 to 604 are enriched in polar residues; it reads ITQSNGCSQP. Over residues 634 to 653 the composition is skewed to low complexity; sequence SSSSEAESTCSGTSSEESNT.

This sequence belongs to the SMG8 family.

Its function is as follows. Involved in nonsense-mediated decay (NMD) of mRNAs containing premature stop codons. Probable component of kinase complex containing nonC and recruited to stalled ribosomes. The chain is Nonsense-mediated mRNA decay factor SMG8 from Drosophila pseudoobscura pseudoobscura (Fruit fly).